We begin with the raw amino-acid sequence, 298 residues long: Apolipoprotein E (298 aa).

An N-terminal signal peptide occupies residues 1-18 (MKVLWAALVVTLLAGCRA). Repeat copies occupy residues 74–94 (LLIE…EKEL), 95–116 (GPVA…QARL), 117–138 (GADM…QAML), 139–160 (GQSS…RKRL), 161–182 (QRDI…QEGA), 183–203 (ERGV…GRLQ), 204–221 (ALTS…GEQM), and 222–243 (RGRL…REQM). Residues 95 to 243 (GPVAEDTKAR…DRLEEVREQM (149 aa)) form an 8 X 22 AA approximate tandem repeats region. Position 137 is a methionine sulfoxide (Met137). The residue at position 141 (Ser141) is a Phosphoserine. The segment at 151–161 (SHLRKMRKRLQ) is LDL and other lipoprotein receptors binding. Residue 155 to 158 (KMRK) coordinates heparin. The interval 203 to 271 (QALTSQPLQE…KSWFEPMMED (69 aa)) is lipid-binding and lipoprotein association. 217 to 224 (WGEQMRGR) contributes to the heparin binding site. The tract at residues 259–271 (ARLKSWFEPMMED) is specificity for association with VLDL.

The protein belongs to the apolipoprotein A1/A4/E family. Homotetramer. May interact with ABCA1; functionally associated with ABCA1 in the biogenesis of HDLs. May interact with APP/A4 amyloid-beta peptide; the interaction is extremely stable in vitro but its physiological significance is unclear. May interact with MAPT. May interact with MAP2. In the cerebrospinal fluid, interacts with secreted SORL1. Interacts with PMEL; this allows the loading of PMEL luminal fragment on ILVs to induce fibril nucleation. APOE exists as multiple glycosylated and sialylated glycoforms within cells and in plasma. The extent of glycosylation and sialylation are tissue and context specific. Post-translationally, glycated in plasma VLDL. In terms of processing, phosphorylated by FAM20C in the extracellular medium.

Its subcellular location is the secreted. It is found in the extracellular space. The protein resides in the extracellular matrix. It localises to the extracellular vesicle. The protein localises to the endosome. Its subcellular location is the multivesicular body. Functionally, APOE is an apolipoprotein, a protein associating with lipid particles, that mainly functions in lipoprotein-mediated lipid transport between organs via the plasma and interstitial fluids. APOE is a core component of plasma lipoproteins and is involved in their production, conversion and clearance. Apolipoproteins are amphipathic molecules that interact both with lipids of the lipoprotein particle core and the aqueous environment of the plasma. As such, APOE associates with chylomicrons, chylomicron remnants, very low density lipoproteins (VLDL) and intermediate density lipoproteins (IDL) but shows a preferential binding to high-density lipoproteins (HDL). It also binds a wide range of cellular receptors including the LDL receptor/LDLR, the LDL receptor-related proteins LRP1, LRP2 and LRP8 and the very low-density lipoprotein receptor/VLDLR that mediate the cellular uptake of the APOE-containing lipoprotein particles. Finally, APOE also has a heparin-binding activity and binds heparan-sulfate proteoglycans on the surface of cells, a property that supports the capture and the receptor-mediated uptake of APOE-containing lipoproteins by cells. A main function of APOE is to mediate lipoprotein clearance through the uptake of chylomicrons, VLDLs, and HDLs by hepatocytes. APOE is also involved in the biosynthesis by the liver of VLDLs as well as their uptake by peripheral tissues ensuring the delivery of triglycerides and energy storage in muscle, heart and adipose tissues. By participating in the lipoprotein-mediated distribution of lipids among tissues, APOE plays a critical role in plasma and tissues lipid homeostasis. APOE is also involved in two steps of reverse cholesterol transport, the HDLs-mediated transport of cholesterol from peripheral tissues to the liver, and thereby plays an important role in cholesterol homeostasis. First, it is functionally associated with ABCA1 in the biogenesis of HDLs in tissues. Second, it is enriched in circulating HDLs and mediates their uptake by hepatocytes. APOE also plays an important role in lipid transport in the central nervous system, regulating neuron survival and sprouting. This Cavia tschudii (Montane guinea pig) protein is Apolipoprotein E (APOE).